We begin with the raw amino-acid sequence, 257 residues long: Global transcriptional regulator CodY (257 aa).

A GAF domain region spans residues 1–155 (MSLLSKTREL…AATVIGMEIL (155 aa)). The H-T-H motif DNA-binding region spans 203–222 (ASKVADRVGITRSVIVNALR).

It belongs to the CodY family.

It is found in the cytoplasm. Its function is as follows. DNA-binding global transcriptional regulator which is involved in the adaptive response to starvation and acts by directly or indirectly controlling the expression of numerous genes in response to nutrient availability. During rapid exponential growth, CodY is highly active and represses genes whose products allow adaptation to nutrient depletion. This is Global transcriptional regulator CodY from Staphylococcus epidermidis (strain ATCC 12228 / FDA PCI 1200).